A 296-amino-acid polypeptide reads, in one-letter code: Formamidopyrimidine-DNA glycosylase (296 aa).

P2 serves as the catalytic Schiff-base intermediate with DNA. The active-site Proton donor is E3. K58 functions as the Proton donor; for beta-elimination activity in the catalytic mechanism. DNA is bound by residues H106, R125, and K168. The FPG-type zinc finger occupies 259–295 (RVYDRVGHACPTKGCTGRIGRIVQGGRSTFFCETCQV). Residue R285 is the Proton donor; for delta-elimination activity of the active site.

This sequence belongs to the FPG family. In terms of assembly, monomer. Zn(2+) is required as a cofactor.

It catalyses the reaction Hydrolysis of DNA containing ring-opened 7-methylguanine residues, releasing 2,6-diamino-4-hydroxy-5-(N-methyl)formamidopyrimidine.. It carries out the reaction 2'-deoxyribonucleotide-(2'-deoxyribose 5'-phosphate)-2'-deoxyribonucleotide-DNA = a 3'-end 2'-deoxyribonucleotide-(2,3-dehydro-2,3-deoxyribose 5'-phosphate)-DNA + a 5'-end 5'-phospho-2'-deoxyribonucleoside-DNA + H(+). Its function is as follows. Involved in base excision repair of DNA damaged by oxidation or by mutagenic agents. Acts as a DNA glycosylase that recognizes and removes damaged bases. Has a preference for oxidized purines, such as 7,8-dihydro-8-oxoguanine (8-oxoG). Has AP (apurinic/apyrimidinic) lyase activity and introduces nicks in the DNA strand. Cleaves the DNA backbone by beta-delta elimination to generate a single-strand break at the site of the removed base with both 3'- and 5'-phosphates. The protein is Formamidopyrimidine-DNA glycosylase of Methylorubrum populi (strain ATCC BAA-705 / NCIMB 13946 / BJ001) (Methylobacterium populi).